Reading from the N-terminus, the 122-residue chain is Large ribosomal subunit protein uL14 (122 aa).

It belongs to the universal ribosomal protein uL14 family. As to quaternary structure, part of the 50S ribosomal subunit. Forms a cluster with proteins L3 and L19. In the 70S ribosome, L14 and L19 interact and together make contacts with the 16S rRNA in bridges B5 and B8.

Functionally, binds to 23S rRNA. Forms part of two intersubunit bridges in the 70S ribosome. The sequence is that of Large ribosomal subunit protein uL14 from Rhizobium meliloti (strain 1021) (Ensifer meliloti).